Here is a 217-residue protein sequence, read N- to C-terminus: Probable GTP-binding protein EngB (217 aa).

The region spanning 33–217 (GPAEIAFAGR…RITIEQAVAR (185 aa)) is the EngB-type G domain. GTP-binding positions include 41–48 (GRSNVGKS), 68–72 (GRTQE), 95–98 (DMPG), 162–165 (TKTD), and 196–198 (TSS). 2 residues coordinate Mg(2+): S48 and T70.

The protein belongs to the TRAFAC class TrmE-Era-EngA-EngB-Septin-like GTPase superfamily. EngB GTPase family. Requires Mg(2+) as cofactor.

In terms of biological role, necessary for normal cell division and for the maintenance of normal septation. This Sinorhizobium fredii (strain NBRC 101917 / NGR234) protein is Probable GTP-binding protein EngB.